The primary structure comprises 544 residues: Dynein intermediate chain 1 (544 aa).

WD repeat units lie at residues 241-281 (KARS…YPVS), 289-330 (GHLE…RPSE), 342-387 (SQCI…QPSN), 402-441 (VMTSNSQNVFLEKNKDFALTSSFDWTVRLWQCSPSRNQHE), 461-501 (THKA…EAPV), and 506-544 (PDGKPLNKIAWQPEKRNLACGGLNGNVHIYKHLSPNLAN).

This sequence belongs to the dynein intermediate chain family.

It localises to the cytoplasm. Its function is as follows. Has a role in meiotic nuclear divsion where it promotes the movement of 'horsetails'. This is Dynein intermediate chain 1 (dic1) from Schizosaccharomyces pombe (strain 972 / ATCC 24843) (Fission yeast).